Here is a 725-residue protein sequence, read N- to C-terminus: Probable alpha-galactosidase G (725 aa).

Asn-407 carries N-linked (GlcNAc...) asparagine glycosylation. The Nucleophile role is filled by Asp-484. Asn-490 carries an N-linked (GlcNAc...) asparagine glycan. The Proton donor role is filled by Asp-546. An N-linked (GlcNAc...) asparagine glycan is attached at Asn-672.

This sequence belongs to the glycosyl hydrolase 36 family. Homotetramer. Mg(2+) is required as a cofactor. Requires NAD(+) as cofactor.

It is found in the secreted. It carries out the reaction Hydrolysis of terminal, non-reducing alpha-D-galactose residues in alpha-D-galactosides, including galactose oligosaccharides, galactomannans and galactolipids.. Hydrolyzes a variety of simple alpha-D-galactoside as well as more complex molecules such as oligosaccharides and polysaccharides. This Aspergillus terreus (strain NIH 2624 / FGSC A1156) protein is Probable alpha-galactosidase G (aglG).